The following is an 89-amino-acid chain: LYR motif-containing protein 4 (89 aa).

It belongs to the complex I LYR family.

The protein resides in the mitochondrion. The protein localises to the nucleus. Its pathway is cofactor biosynthesis; iron-sulfur cluster biosynthesis. Required for nuclear and mitochondrial iron-sulfur protein biosynthesis. The chain is LYR motif-containing protein 4 (lyrm4) from Danio rerio (Zebrafish).